The sequence spans 282 residues: V-set domain-containing T-cell activation inhibitor 1 (282 aa).

The signal sequence occupies residues 1–24 (MASLGQIIFWSIINVIIILAGAIV). Ig-like V-type domains follow at residues 35 to 144 (HFIT…ANLE) and 153 to 241 (PEIN…IKVT). Disulfide bonds link Cys-56-Cys-130 and Cys-168-Cys-225. The N-linked (GlcNAc...) asparagine glycan is linked to Asn-216. A lipid anchor (GPI-anchor amidated glycine) is attached at Gly-257. A propeptide spans 258 to 282 (PSPCVSSVSAAGWALLSLSCCLMLR) (removed in mature form).

The protein belongs to the immunoglobulin superfamily. BTN/MOG family. N-glycosylated.

The protein resides in the cell membrane. Negatively regulates T-cell-mediated immune response by inhibiting T-cell activation, proliferation, cytokine production and development of cytotoxicity. When expressed on the cell surface of tumor macrophages, plays an important role, together with regulatory T-cells (Treg), in the suppression of tumor-associated antigen-specific T-cell immunity. Involved in promoting epithelial cell transformation. This is V-set domain-containing T-cell activation inhibitor 1 from Rattus norvegicus (Rat).